Here is a 314-residue protein sequence, read N- to C-terminus: Probable 2-(5''-triphosphoribosyl)-3'-dephosphocoenzyme-A synthase (314 aa).

The protein belongs to the CitG/MdcB family.

It carries out the reaction 3'-dephospho-CoA + ATP = 2'-(5''-triphospho-alpha-D-ribosyl)-3'-dephospho-CoA + adenine. The sequence is that of Probable 2-(5''-triphosphoribosyl)-3'-dephosphocoenzyme-A synthase from Photobacterium profundum (strain SS9).